Consider the following 293-residue polypeptide: Probable xyloglucan endotransglucosylase/hydrolase protein 7 (293 aa).

The first 29 residues, 1–29, serve as a signal peptide directing secretion; it reads MVVSLFSSRNVFYTLSLCLFAALYQPVMS. The region spanning 30–223 is the GH16 domain; it reads RPAKFEDDFR…WSRAPFYAYY (194 aa). Glutamate 109 acts as the Nucleophile in catalysis. Glutamate 113 (proton donor) is an active-site residue. Position 113 (glutamate 113) interacts with xyloglucan. N-linked (GlcNAc...) asparagine glycosylation is present at asparagine 117. Residues 126–128, 136–138, 202–203, and glycine 207 contribute to the xyloglucan site; these read QTN, DRE, and DW. Residue asparagine 213 is glycosylated (N-linked (GlcNAc...) asparagine). Intrachain disulfides connect cysteine 231-cysteine 239 and cysteine 276-cysteine 289. Arginine 281 is a xyloglucan binding site.

The protein belongs to the glycosyl hydrolase 16 family. XTH group 1 subfamily. Contains at least one intrachain disulfide bond essential for its enzymatic activity.

It is found in the secreted. It localises to the cell wall. The protein localises to the extracellular space. Its subcellular location is the apoplast. It carries out the reaction breaks a beta-(1-&gt;4) bond in the backbone of a xyloglucan and transfers the xyloglucanyl segment on to O-4 of the non-reducing terminal glucose residue of an acceptor, which can be a xyloglucan or an oligosaccharide of xyloglucan.. Its function is as follows. Catalyzes xyloglucan endohydrolysis (XEH) and/or endotransglycosylation (XET). Cleaves and religates xyloglucan polymers, an essential constituent of the primary cell wall, and thereby participates in cell wall construction of growing tissues. In Arabidopsis thaliana (Mouse-ear cress), this protein is Probable xyloglucan endotransglucosylase/hydrolase protein 7 (XTH7).